A 473-amino-acid polypeptide reads, in one-letter code: Pentatricopeptide repeat-containing protein At3g60050 (473 aa).

PPR repeat units follow at residues 148–182 (TVNS…GFPT), 183–217 (TART…NYRP), 218–252 (FKHS…GFSP), 253–287 (DVLT…GFSP), 288–322 (DSYT…GIDP), 323–357 (SVLH…GCRP), 358–392 (DVVC…GQLP), 393–427 (NVFT…GCNP), and 428–462 (NFVV…GHYV).

This sequence belongs to the PPR family. P subfamily.

The sequence is that of Pentatricopeptide repeat-containing protein At3g60050 from Arabidopsis thaliana (Mouse-ear cress).